An 82-amino-acid polypeptide reads, in one-letter code: Small ribosomal subunit protein bS16 (82 aa).

This sequence belongs to the bacterial ribosomal protein bS16 family.

The polypeptide is Small ribosomal subunit protein bS16 (Shewanella sp. (strain MR-4)).